Here is a 235-residue protein sequence, read N- to C-terminus: 2,3,4,5-tetrahydropyridine-2,6-dicarboxylate N-acetyltransferase (235 aa).

This sequence belongs to the transferase hexapeptide repeat family. DapH subfamily.

The enzyme catalyses (S)-2,3,4,5-tetrahydrodipicolinate + acetyl-CoA + H2O = L-2-acetamido-6-oxoheptanedioate + CoA. The protein operates within amino-acid biosynthesis; L-lysine biosynthesis via DAP pathway; LL-2,6-diaminopimelate from (S)-tetrahydrodipicolinate (acetylase route): step 1/3. In terms of biological role, catalyzes the transfer of an acetyl group from acetyl-CoA to tetrahydrodipicolinate. This is 2,3,4,5-tetrahydropyridine-2,6-dicarboxylate N-acetyltransferase from Exiguobacterium sp. (strain ATCC BAA-1283 / AT1b).